We begin with the raw amino-acid sequence, 273 residues long: SPbeta prophage-derived uncharacterized protein YomF (273 aa).

A coiled-coil region spans residues 119–149; it reads VIETLQGLIDEAEDTIIRMNERIAECERVTK.

The chain is SPbeta prophage-derived uncharacterized protein YomF (yomF) from Bacillus subtilis (strain 168).